We begin with the raw amino-acid sequence, 130 residues long: 3-aminoacrylate deaminase RutC (130 aa).

The protein belongs to the RutC family.

The enzyme catalyses (Z)-3-aminoacrylate + H2O + H(+) = 3-oxopropanoate + NH4(+). Its function is as follows. Involved in pyrimidine catabolism. Catalyzes the deamination of 3-aminoacrylate to malonic semialdehyde, a reaction that can also occur spontaneously. RutC may facilitate the reaction and modulate the metabolic fitness, rather than catalyzing essential functions. The polypeptide is 3-aminoacrylate deaminase RutC (Variovorax paradoxus (strain S110)).